We begin with the raw amino-acid sequence, 214 residues long: Leucyl/phenylalanyl-tRNA--protein transferase (214 aa).

The disordered stretch occupies residues 194–214; it reads FAPPGYSPDPASVVQRSSQTS.

It belongs to the L/F-transferase family.

It is found in the cytoplasm. It catalyses the reaction N-terminal L-lysyl-[protein] + L-leucyl-tRNA(Leu) = N-terminal L-leucyl-L-lysyl-[protein] + tRNA(Leu) + H(+). The catalysed reaction is N-terminal L-arginyl-[protein] + L-leucyl-tRNA(Leu) = N-terminal L-leucyl-L-arginyl-[protein] + tRNA(Leu) + H(+). It carries out the reaction L-phenylalanyl-tRNA(Phe) + an N-terminal L-alpha-aminoacyl-[protein] = an N-terminal L-phenylalanyl-L-alpha-aminoacyl-[protein] + tRNA(Phe). In terms of biological role, functions in the N-end rule pathway of protein degradation where it conjugates Leu, Phe and, less efficiently, Met from aminoacyl-tRNAs to the N-termini of proteins containing an N-terminal arginine or lysine. This chain is Leucyl/phenylalanyl-tRNA--protein transferase, found in Cereibacter sphaeroides (strain ATCC 17025 / ATH 2.4.3) (Rhodobacter sphaeroides).